The sequence spans 38 residues: Kappa-actitoxin-Bcs3a (38 aa).

One can recognise a ShKT domain in the interval 2–37 (CIDRFPTGTCKHVKKGGSCKNSQKYRINCAKTCGLC). Cystine bridges form between Cys-2/Cys-37, Cys-11/Cys-30, and Cys-20/Cys-34. The tract at residues 25-26 (KY) is crucial for binding to potassium channels.

Belongs to the sea anemone type 1 potassium channel toxin family. Type 1b subfamily.

Its subcellular location is the secreted. It localises to the nematocyst. Its function is as follows. Inhibits voltage-gated potassium channels (IC(50)=405.0 nM for rKCNA1/Kv1.1, IC(50)=0.03 nM for rKCNA2/Kv1.2, IC(50)=1.31 nM for rKCNA6/Kv1.6, IC(50)=74.11 nM for hKCNA3/Kv1.3, and IC(50)=247.69 nM for insect Shaker IR). Binds the Shaker IR channels in a voltage-independent manner. This chain is Kappa-actitoxin-Bcs3a, found in Bunodosoma caissarum (Sea anemone).